The primary structure comprises 208 residues: Tektin bundle-interacting protein 1 (208 aa).

In terms of assembly, microtubule inner protein component of sperm flagellar doublet microtubules. In terms of tissue distribution, expressed in trachea multiciliated cells.

It localises to the cytoplasm. The protein localises to the cytoskeleton. Its subcellular location is the cilium axoneme. It is found in the flagellum axoneme. Its function is as follows. Microtubule inner protein (MIP) part of the dynein-decorated doublet microtubules (DMTs) in cilia axoneme, which is required for motile cilia beating. Located at the center of the tektin bundle where may function to recruit tektins or stabilize the bundle. The polypeptide is Tektin bundle-interacting protein 1 (TEKTIP1) (Bos taurus (Bovine)).